The chain runs to 553 residues: MSERIFIGVAWPYANSQLHLGHVAGAYLPADIFARYHRTRGDEVLMVSGSDMHGTPITIRAEQEGITAAEVAERYHRLFMASWPKLGISWDCYTSTATANHARTAQQMFLSLYEKGYIYKDTVCQPFCPHCNRFLPDRYVEGTCPHCKYEGARGDQCDNCGKPLNAAELLNFRCKNCGNPPEFRETEHFFLKLSAFEEELTHWVETKTYWRTNVLNFTLRYLKEGLKDRAITRDLDWGVPLPLPGYEGKRLYVWFEAVIGYLSASIEWAASKGQPDEWQKYWGGDTKSYYFIGKDNIPFHTIIWPAMLMGRGGLDLPYDVPSNEYLTIEAQKFSKSRNKAIWVDDVLSRYSVDTLRYLLSANMPESSDMDFSWREFVRRNNDELVATYGNLAQRVLTMVCRNFDNKVPEYGELDERSLNLIEKTSAMLFETDKALHGCNFREAIKLAMSLAQEANRYLDEKAPWKEIKVDKAAAARSLYVAMAALSGLRVAFYPFLPESSSRLSTYLGFGSEIEKDGWVLKMPVAGQEMIPPEPLFKKLEDSVVEEETARMGL.

Residues 12–22 carry the 'HIGH' region motif; the sequence is PYANSQLHLGH. Zn(2+) contacts are provided by cysteine 144, cysteine 147, cysteine 157, and cysteine 160. Residues 332-336 carry the 'KMSKS' region motif; the sequence is KFSKS. Lysine 335 lines the ATP pocket.

This sequence belongs to the class-I aminoacyl-tRNA synthetase family. MetG type 1 subfamily. Monomer. The cofactor is Zn(2+).

It localises to the cytoplasm. It carries out the reaction tRNA(Met) + L-methionine + ATP = L-methionyl-tRNA(Met) + AMP + diphosphate. Functionally, is required not only for elongation of protein synthesis but also for the initiation of all mRNA translation through initiator tRNA(fMet) aminoacylation. The polypeptide is Methionine--tRNA ligase (Dehalococcoides mccartyi (strain ATCC BAA-2266 / KCTC 15142 / 195) (Dehalococcoides ethenogenes (strain 195))).